The chain runs to 179 residues: Large ribosomal subunit protein uL5 (179 aa).

Belongs to the universal ribosomal protein uL5 family. In terms of assembly, part of the 50S ribosomal subunit; part of the 5S rRNA/L5/L18/L25 subcomplex. Contacts the 5S rRNA and the P site tRNA. Forms a bridge to the 30S subunit in the 70S ribosome.

This is one of the proteins that bind and probably mediate the attachment of the 5S RNA into the large ribosomal subunit, where it forms part of the central protuberance. In the 70S ribosome it contacts protein S13 of the 30S subunit (bridge B1b), connecting the 2 subunits; this bridge is implicated in subunit movement. Contacts the P site tRNA; the 5S rRNA and some of its associated proteins might help stabilize positioning of ribosome-bound tRNAs. The chain is Large ribosomal subunit protein uL5 from Neisseria meningitidis serogroup C (strain 053442).